The chain runs to 300 residues: Sporulation protein SPS18 (300 aa).

An Arf-GAP domain is found at 11-130 (ENRKRLLRAK…LANEVRSNDI (120 aa)). The C4-type zinc-finger motif lies at 28–51 (CFECKSVNPQFVSCSFGIFICVNC).

The sequence is that of Sporulation protein SPS18 (SPS18) from Saccharomyces cerevisiae (strain ATCC 204508 / S288c) (Baker's yeast).